Here is a 423-residue protein sequence, read N- to C-terminus: Glutamyl-tRNA(Gln) amidotransferase subunit A (423 aa).

Residues Lys-28 and Ser-103 each act as charge relay system in the active site. Ser-127 acts as the Acyl-ester intermediate in catalysis.

This sequence belongs to the amidase family. GatA subfamily. Heterotrimer of A, B and C subunits.

The catalysed reaction is L-glutamyl-tRNA(Gln) + L-glutamine + ATP + H2O = L-glutaminyl-tRNA(Gln) + L-glutamate + ADP + phosphate + H(+). Its function is as follows. Allows the formation of correctly charged Gln-tRNA(Gln) through the transamidation of misacylated Glu-tRNA(Gln) in organisms which lack glutaminyl-tRNA synthetase. The reaction takes place in the presence of glutamine and ATP through an activated gamma-phospho-Glu-tRNA(Gln). In Halobacterium salinarum (strain ATCC 700922 / JCM 11081 / NRC-1) (Halobacterium halobium), this protein is Glutamyl-tRNA(Gln) amidotransferase subunit A.